A 171-amino-acid polypeptide reads, in one-letter code: Large ribosomal subunit protein uL22 (171 aa).

Belongs to the universal ribosomal protein uL22 family.

The chain is Large ribosomal subunit protein uL22 (RPL17) from Zea mays (Maize).